We begin with the raw amino-acid sequence, 202 residues long: MHSLLFCEPGTFSLNDLKKYHSKPTIKVNDEMYNLIKNNTCLVYRDTENVHNAYLFGKLFALHTYQLVAEHFNDIAQTGFLDYELVKKGVWFKKNFDTDKLWDSYECDWDNNDLKKAVKKNNKSILWIGTTDGGDVGAYLYVHKTDGVIDSIIVDNNFFFGNLDTDSEQESDQESDQDSDQESEESDQESDQDSDQDSEGSE.

The segment at aspartate 164–glutamate 202 is disordered. Over residues threonine 165–glutamate 202 the composition is skewed to acidic residues.

This is an uncharacterized protein from Acanthamoeba polyphaga mimivirus (APMV).